We begin with the raw amino-acid sequence, 58 residues long: Large ribosomal subunit protein uL30 (58 aa).

The protein belongs to the universal ribosomal protein uL30 family. As to quaternary structure, part of the 50S ribosomal subunit.

This chain is Large ribosomal subunit protein uL30, found in Trichlorobacter lovleyi (strain ATCC BAA-1151 / DSM 17278 / SZ) (Geobacter lovleyi).